A 473-amino-acid chain; its full sequence is Glutamate--tRNA ligase 2 (473 aa).

Residues 11–21 (PSPTGYLHIGG) carry the 'HIGH' region motif. Positions 113–133 (KARAEGRPPRYDGRWRDRDPS) are enriched in basic and acidic residues. The interval 113 to 136 (KARAEGRPPRYDGRWRDRDPSEAP) is disordered. The short motif at 240–244 (KLSKR) is the 'KMSKS' region element. Lysine 243 contacts ATP.

Belongs to the class-I aminoacyl-tRNA synthetase family. Glutamate--tRNA ligase type 1 subfamily. In terms of assembly, monomer.

Its subcellular location is the cytoplasm. It catalyses the reaction tRNA(Glu) + L-glutamate + ATP = L-glutamyl-tRNA(Glu) + AMP + diphosphate. Catalyzes the attachment of glutamate to tRNA(Glu) in a two-step reaction: glutamate is first activated by ATP to form Glu-AMP and then transferred to the acceptor end of tRNA(Glu). This is Glutamate--tRNA ligase 2 from Brucella canis (strain ATCC 23365 / NCTC 10854 / RM-666).